The sequence spans 1649 residues: Cortactin-binding protein 2 (1649 aa).

The segment at 1–27 (MATDSASCEPDLSRAPGDAEGATAEAA) is disordered. Positions 15–25 (APGDAEGATAE) are enriched in low complexity. Residues 118–275 (RKMQERMSAQ…EQMKKGNDGK (158 aa)) adopt a coiled-coil conformation. Disordered regions lie at residues 322 to 439 (PLSV…PGLN), 451 to 476 (GNANDPDQNGNNTQSPPSRDVSPTSR), and 492 to 604 (ALSR…LPPK). The segment covering 330–342 (STGSPLVSTNTKG) has biased composition (polar residues). The span at 395–416 (STPSTPSGTAPAAAQTLGAAPQ) shows a compositional bias: low complexity. Residues 492–503 (ALSRFTSPQAGA) show a composition bias toward polar residues. R495 bears the Asymmetric dimethylarginine mark. 6 ANK repeats span residues 699–729 (GRPTLLQQAAAQGNVTLLSMLLNEEGLDINY), 733–762 (DSHSALYSAAKNGHTDCVRLLLNAEARVDA), 766–795 (NGFTPLCVAAAQGHFECIELLTAYNANINH), 799–828 (GGQTPLYLACKTGNKECIKLLLEAGTDRSI), 832–861 (DGWTPIHAAVDTGNVDSLKLLMYHRVPAPG), and 901–931 (EGWTAAHIAASKGFKNCLEILCRHGGLEPER). Residues 1438-1471 (SAAWRKVNTSPRKKPGHFSSPMWNKPDLKHEGMR) are disordered. S1510 carries the phosphoserine modification. The segment at 1527–1649 (KSESDISKIA…KHEHVEKRNK (123 aa)) is disordered. The segment covering 1528–1546 (SESDISKIADSREDLRTFD) has biased composition (basic and acidic residues). Polar residues-rich tracts occupy residues 1547-1557 (SSRTNPVTSAP), 1571-1584 (PLSSHQTTECSNSK), and 1621-1630 (NTRQLEINNN). A compositionally biased stretch (basic and acidic residues) spans 1631–1649 (SKEENWNVDKHEHVEKRNK).

In terms of assembly, interacts with CTTN/cortactin SH3 domain. Interacts with STRN, STRN4/zinedin and MOB4/phocein; this interactions mediate the association with the STRIPAK core complex and may regulate dendritic spine distribution of the STRIPAK complex in hippocampal neurons. Activation of glutamate receptors weakens the interaction with STRN and STRN4.

The protein localises to the cytoplasm. It localises to the cell cortex. The protein resides in the cell projection. It is found in the dendritic spine. Regulates the dendritic spine distribution of CTTN/cortactin in hippocampal neurons, and thus controls dendritic spinogenesis and dendritic spine maintenance. Associates with the striatin-interacting phosphatase and kinase (STRIPAK) core complex to regulate dendritic spine distribution of the STRIPAK complex in hippocampal neurons. This is Cortactin-binding protein 2 (Cttnbp2) from Rattus norvegicus (Rat).